A 444-amino-acid polypeptide reads, in one-letter code: UDP-N-acetylmuramate--L-alanine ligase (444 aa).

Gly110–Ser116 provides a ligand contact to ATP.

Belongs to the MurCDEF family.

It is found in the cytoplasm. It catalyses the reaction UDP-N-acetyl-alpha-D-muramate + L-alanine + ATP = UDP-N-acetyl-alpha-D-muramoyl-L-alanine + ADP + phosphate + H(+). The protein operates within cell wall biogenesis; peptidoglycan biosynthesis. Cell wall formation. This is UDP-N-acetylmuramate--L-alanine ligase from Streptococcus pneumoniae (strain CGSP14).